The following is a 396-amino-acid chain: Pectinesterase (396 aa).

The signal sequence occupies residues 1-21 (MQSKTLYLKATALLGGCTVFA). Threonine 174 is a binding site for substrate. Catalysis depends on aspartate 232, which acts as the Proton donor. The Nucleophile role is filled by aspartate 259. Residues arginine 324 and tryptophan 326 each coordinate substrate.

Belongs to the pectinesterase family.

The protein resides in the secreted. It carries out the reaction [(1-&gt;4)-alpha-D-galacturonosyl methyl ester](n) + n H2O = [(1-&gt;4)-alpha-D-galacturonosyl](n) + n methanol + n H(+). It functions in the pathway glycan metabolism; pectin degradation; 2-dehydro-3-deoxy-D-gluconate from pectin: step 1/5. In terms of biological role, involved in maceration and soft-rotting of plant tissue. This Ralstonia nicotianae (strain ATCC BAA-1114 / GMI1000) (Ralstonia solanacearum) protein is Pectinesterase (pme).